We begin with the raw amino-acid sequence, 286 residues long: Shikimate dehydrogenase (NADP(+)) (286 aa).

Shikimate contacts are provided by residues 21–23 and Thr-68; that span reads TLS. The active-site Proton acceptor is Lys-72. Residue Glu-84 participates in NADP(+) binding. Residues Asn-93 and Asp-108 each contribute to the shikimate site. Residues 132 to 136 and Leu-230 each bind NADP(+); that span reads GNGGA. Shikimate is bound at residue Tyr-232. Residue Gly-253 coordinates NADP(+).

This sequence belongs to the shikimate dehydrogenase family. As to quaternary structure, homodimer.

It catalyses the reaction shikimate + NADP(+) = 3-dehydroshikimate + NADPH + H(+). Its pathway is metabolic intermediate biosynthesis; chorismate biosynthesis; chorismate from D-erythrose 4-phosphate and phosphoenolpyruvate: step 4/7. Its function is as follows. Involved in the biosynthesis of the chorismate, which leads to the biosynthesis of aromatic amino acids. Catalyzes the reversible NADPH linked reduction of 3-dehydroshikimate (DHSA) to yield shikimate (SA). This chain is Shikimate dehydrogenase (NADP(+)), found in Microcystis aeruginosa (strain NIES-843 / IAM M-2473).